Here is a 406-residue protein sequence, read N- to C-terminus: Peptidase T (406 aa).

His81 contacts Zn(2+). The active site involves Asp83. A Zn(2+)-binding site is contributed by Asp142. The Proton acceptor role is filled by Glu176. Residues Glu177, Asp199, and His381 each contribute to the Zn(2+) site.

Belongs to the peptidase M20B family. Zn(2+) is required as a cofactor.

It localises to the cytoplasm. It catalyses the reaction Release of the N-terminal residue from a tripeptide.. Cleaves the N-terminal amino acid of tripeptides. The protein is Peptidase T of Streptococcus suis (strain 98HAH33).